We begin with the raw amino-acid sequence, 179 residues long: Large ribosomal subunit protein bL9 (179 aa).

Residues 155–179 (KPEEAPVPVAEEPTAETEQAEVAAE) are disordered. Residues 167–179 (PTAETEQAEVAAE) show a composition bias toward acidic residues.

Belongs to the bacterial ribosomal protein bL9 family.

Its function is as follows. Binds to the 23S rRNA. The sequence is that of Large ribosomal subunit protein bL9 from Porphyromonas gingivalis (strain ATCC BAA-308 / W83).